The chain runs to 395 residues: S-adenosylmethionine synthase (395 aa).

Position 14 (H14) interacts with ATP. Residue D16 participates in Mg(2+) binding. E42 contributes to the K(+) binding site. E55 and Q98 together coordinate L-methionine. The segment at 98-108 (QSPDIALGVDK) is flexible loop. ATP contacts are provided by residues 174–176 (DGK), 240–241 (RF), D249, 255–256 (RK), A272, and K276. Residue D249 coordinates L-methionine. Position 280 (K280) interacts with L-methionine.

It belongs to the AdoMet synthase family. As to quaternary structure, homotetramer; dimer of dimers. Mg(2+) is required as a cofactor. The cofactor is K(+).

The protein resides in the cytoplasm. It carries out the reaction L-methionine + ATP + H2O = S-adenosyl-L-methionine + phosphate + diphosphate. The protein operates within amino-acid biosynthesis; S-adenosyl-L-methionine biosynthesis; S-adenosyl-L-methionine from L-methionine: step 1/1. Catalyzes the formation of S-adenosylmethionine (AdoMet) from methionine and ATP. The overall synthetic reaction is composed of two sequential steps, AdoMet formation and the subsequent tripolyphosphate hydrolysis which occurs prior to release of AdoMet from the enzyme. The chain is S-adenosylmethionine synthase from Thermotoga neapolitana (strain ATCC 49049 / DSM 4359 / NBRC 107923 / NS-E).